Consider the following 184-residue polypeptide: ESX-1 secretion-associated protein EspD (184 aa).

A disordered region spans residues 33 to 56 (IGVGSAATPDTGPDLDNAHGQAET).

The protein resides in the secreted. Required for ESX-1 function. Required for the maintenance of adequate cellular levels of both EspA and EspC. Facilitates EsxA secretion. The chain is ESX-1 secretion-associated protein EspD from Mycobacterium tuberculosis (strain CDC 1551 / Oshkosh).